Consider the following 368-residue polypeptide: MAQDWAGFSEEELRRLKQNKDPFEPQRRIPVKKTRQQLQREKALLEQSQKLGLQDGSASLLPEQLLSAPKQRANSQKPRSPSPVAPSPLTPTSSSGDGKLPGVGSQPQEPGLENSHHGHKSAEVRAPKPDCKVEKKKMELQEKSRWEVLQQEQRLMEEKNKRKKALLAQAIAERSKKTQAETIKLKRIQKELQALDDMVSADIGILRNRIDQASLEYSYARKRFDRAEAEYITAKLDLQRKTETKEQLTEHLCTIIQQNELRKAKKLEELMQQLDVQADEEALQLEVEVEQLLREQEAEAAKQMASVERLCPPDGESVSSELAEENNEPQKQAPSPETDKPGKCCSSSPHRLDCPDPGAKNFSAAVAT.

Disordered stretches follow at residues 1-43 (MAQD…REKA), 55-133 (DGSA…DCKV), and 302-368 (KQMA…AVAT). Positions 11-27 (EELRRLKQNKDPFEPQR) are enriched in basic and acidic residues. Positions 80–89 (SPSPVAPSPL) are enriched in pro residues. Residues 114–133 (NSHHGHKSAEVRAPKPDCKV) show a composition bias toward basic and acidic residues. Residues 145 to 310 (RWEVLQQEQR…AKQMASVERL (166 aa)) are a coiled coil. A necessary for interaction with RCHY1 region spans residues 188–368 (IQKELQALDD…AKNFSAAVAT (181 aa)).

Belongs to the GORAB family. As to quaternary structure, interacts with RCHY1. Interacts with SCYL1 and RAB6A/RAB6. As to expression, expressed in small intestine, kidney, skeletal muscle, lung, spleen, brain and heart. High expression is observed in osteoblasts and skin; also expressed in osteoclasts albeit at lower levels.

Its subcellular location is the cytoplasm. The protein resides in the golgi apparatus. The chain is RAB6-interacting golgin (Gorab) from Mus musculus (Mouse).